Reading from the N-terminus, the 370-residue chain is Protein STRICTOSIDINE SYNTHASE-LIKE 9 (370 aa).

The first 26 residues, 1–26, serve as a signal peptide directing secretion; the sequence is MPINQKIPTWFAVPAVFAVLSVISYQ. Residues Asn-97 and Asn-171 are each glycosylated (N-linked (GlcNAc...) asparagine).

The protein belongs to the strictosidine synthase family.

Its subcellular location is the vacuole. This is Protein STRICTOSIDINE SYNTHASE-LIKE 9 from Arabidopsis thaliana (Mouse-ear cress).